Consider the following 529-residue polypeptide: Tyrosine-protein kinase Fgr (529 aa).

The N-myristoyl glycine moiety is linked to residue Gly2. S-palmitoyl cysteine attachment occurs at residues Cys3 and Cys6. The residue at position 34 (Tyr34) is a Phosphotyrosine. In terms of domain architecture, SH3 spans 77–138 (IGVTLFIALY…PSNYVAPVDS (62 aa)). In terms of domain architecture, SH2 spans 144–241 (WYFGKIGRKD…GLCNLLIAPC (98 aa)). Tyr208 carries the post-translational modification Phosphotyrosine. Position 218 is a phosphoserine (Ser218). The Protein kinase domain maps to 263–516 (ITLERRLGTG…YLQSFLEDYF (254 aa)). ATP contacts are provided by residues 269 to 277 (LGTGCFGDV) and Lys291. Asp382 (proton acceptor) is an active-site residue. Tyr412 is subject to Phosphotyrosine. Position 523 is a phosphotyrosine; by SRC (Tyr523).

It belongs to the protein kinase superfamily. Tyr protein kinase family. SRC subfamily. Interacts with ITGB1, ITGB2, MS4A2/FCER1B, FCER1G, FCGR2A and/or FCGR2B. Interacts (via SH2 domain) with SYK (tyrosine phosphorylated). Interacts (via SH2 domain) with FLT3 (tyrosine phosphorylated). Interacts with PTK2/FAK1. Interacts (via SH2 domain) with HCLS1 (tyrosine phosphorylated by SYK). Interacts with SIRPA and PTPNS1. Interacts (not phosphorylated on tyrosine residues) with CBL; FGR tyrosine phosphorylation promotes dissociation. Interacts with PIK3R1 and FASLG. Interacts with CLNK. In terms of processing, ubiquitinated. Becomes ubiquitinated in response to ITGB2 signaling; this does not lead to degradation. Phosphorylated. Autophosphorylated on tyrosine residues. Becomes phosphorylated in response to FCGR2A and/or FCGR2B engagement, cell adhesion and signaling by ITGB2. Prior phosphorylation at Tyr-523 by SRC inhibits ulterior autophosphorylation at Tyr-412. In terms of tissue distribution, detected in neutrophils, monocytes and natural killer cells (at protein level). Detected in monocytes and large lymphocytes.

The protein localises to the cell membrane. Its subcellular location is the cell projection. The protein resides in the ruffle membrane. It is found in the cytoplasm. It localises to the cytosol. The protein localises to the cytoskeleton. Its subcellular location is the mitochondrion inner membrane. The protein resides in the mitochondrion intermembrane space. It catalyses the reaction L-tyrosyl-[protein] + ATP = O-phospho-L-tyrosyl-[protein] + ADP + H(+). With respect to regulation, activated by autophosphorylation. Prior phosphorylation at Tyr-523 by SRC inhibits ulterior autophosphorylation at Tyr-412. Activated by phorbol myristate acetate, phosphatidic acid and poly-Lys. Binding (via SH2 domain) of HCLS1 that is already phosphorylated by SYK strongly increases kinase activity. Functionally, non-receptor tyrosine-protein kinase that transmits signals from cell surface receptors devoid of kinase activity and contributes to the regulation of immune responses, including neutrophil, monocyte, macrophage and mast cell functions, cytoskeleton remodeling in response to extracellular stimuli, phagocytosis, cell adhesion and migration. Promotes mast cell degranulation, release of inflammatory cytokines and IgE-mediated anaphylaxis. Acts downstream of receptors that bind the Fc region of immunoglobulins, such as MS4A2/FCER1B, FCGR2A and/or FCGR2B. Acts downstream of ITGB1 and ITGB2, and regulates actin cytoskeleton reorganization, cell spreading and adhesion. Depending on the context, activates or inhibits cellular responses. Functions as a negative regulator of ITGB2 signaling, phagocytosis and SYK activity in monocytes. Required for normal ITGB1 and ITGB2 signaling, normal cell spreading and adhesion in neutrophils and macrophages. Functions as a positive regulator of cell migration and regulates cytoskeleton reorganization via RAC1 activation. Phosphorylates SYK (in vitro) and promotes SYK-dependent activation of AKT1 and MAP kinase signaling. Phosphorylates PLD2 in antigen-stimulated mast cells, leading to PLD2 activation and the production of the signaling molecules lysophosphatidic acid and diacylglycerol. Promotes activation of PIK3R1. Phosphorylates FASLG, and thereby regulates its ubiquitination and subsequent internalization. Phosphorylates ABL1. Promotes phosphorylation of CBL, CTTN, PIK3R1, PTK2/FAK1, PTK2B/PYK2 and VAV2. Phosphorylates HCLS1 that has already been phosphorylated by SYK, but not unphosphorylated HCLS1. Together with CLNK, it acts as a negative regulator of natural killer cell-activating receptors and inhibits interferon-gamma production. In Homo sapiens (Human), this protein is Tyrosine-protein kinase Fgr (FGR).